The primary structure comprises 321 residues: Geranylgeranyl transferase type-2 subunit beta 1 (321 aa).

The residue at position 2 (S2) is an N-acetylserine. PFTB repeat units lie at residues 14 to 55 (ADKH…DLLD), 62 to 103 (EEEV…ALFD), 110 to 151 (IGKV…SILK), 158 to 199 (VEKA…AITG), 206 to 247 (KDSL…IMID), and 254 to 296 (KAKL…SLLE). Geranylgeranyl diphosphate contacts are provided by residues 184-186 (HAG) and 226-229 (RPEK). Positions 232 and 234 each coordinate Zn(2+). Position 235–238 (235–238 (YSWW)) interacts with geranylgeranyl diphosphate. A Zn(2+)-binding site is contributed by H284.

The protein belongs to the protein prenyltransferase subunit beta family. Heterotrimer composed of the alpha subunit RGTA, the beta subunit RGTB and REP; within this trimer, RGTA and RGTB form the catalytic component, while REP mediates peptide substrate binding. Requires Zn(2+) as cofactor. The cofactor is Mg(2+).

The enzyme catalyses geranylgeranyl diphosphate + L-cysteinyl-[protein] = S-geranylgeranyl-L-cysteinyl-[protein] + diphosphate. Its activity is regulated as follows. The enzymatic reaction requires the aid of the Rab escort protein REP. Functionally, catalyzes the transfer of a geranylgeranyl moiety from geranylgeranyl diphosphate to both cysteines of Rab proteins with the C-terminal sequence -CCXX, CXXX, -XCCX and -XCXC, such as RABA1A, RABA2A, RABF2A and RABG2. Involved in the geranylgeranylation of RABA2A. In vitro, can prenylate PGGTI targets with the C-terminal sequence Cys-aliphatic-aliphatic-X (CaaX) with leucine in the terminal position. Substrates with the C-terminal sequence -CSIL such as ARAC11/ROP1 or GG2/AGG2 are prenylated independently of REP and when the beta subunit is associated with the alpha subunit RGTA1. Required for male fertility and root tip growth. The chain is Geranylgeranyl transferase type-2 subunit beta 1 from Arabidopsis thaliana (Mouse-ear cress).